An 89-amino-acid chain; its full sequence is uncharacterized protein (89 aa).

The disordered stretch occupies residues 66-89; that stretch reads RIKEQSSSSSATRTTQEPSLHLPD.

This is an uncharacterized protein from Cestrum parqui (CmYLCV).